We begin with the raw amino-acid sequence, 815 residues long: MAGNRLVPRYAHTDGLTRLAYTRDGKFLLTVGSNQVIRKFQVGSDEEPDSIDNHQDPITGIAVAENYFCTCSEDATVCVYPIDSPTEHTLLARTTLPIRDVAYSVDGNWIAIASDETAVKVVSSTDSSQIFSLRPAKASNKHVTYSPNGNFLAVSSCNGILYFYDTQTRELIKFLTNTIASLEAESEICSKAAWHPKNGTFAVASTDHFVSVISPDDWLPLYKLLPKENHSGVTDISWSSNGMYIAASFKKGGILIWDTQSHEVVVELPYSTVVALAWQPFENVLSFTTNQGILYSCPDVIPKSILKEENDPTKPLTSSKSKNRTSKELDDLFGSDDEQSQNVNDLDGNSANEENEFINHDGLDSSLDLDGDSYMVDENDLNLAKKRKQKALIDRTTTIENGSSKRRLLQASIHKPVHTGSTPWQGNRRYLCLNLVGFIWTVQQDAEHNTITVEFHDETTHRKYHFVDDQKFEMACLDHEGALYASPATESSPGVIYYKAHVDWSRKSEWAMALPMENESPVTISLSSSVVLVCTSAGYVRVFSRQGFPISIHRSKHLPFVACSSFQDTIITIANDGLSSDGNSRLVYSIEDISRDEMLQTGDGVALPPQGTLESVFFSDVGDPYIYDSTGVLLVLMHWRIPGQAKWIPVLDTNELERRKSRQESYWPVTVADNQFHCILLKGASRYPYFPRPMFTEFDFRIPCNTNNPDASTSVPVLEELQLRNKLFLTLLEDSIGDGDVTEDEKISIARLEANIDKALLQLIQKACLEERIERVYELTKTLRRTTSIAAAQKIALHHSLTNVAEKIGNLLSNV.

5 WD repeats span residues 11 to 50, 53 to 90, 93 to 132, 135 to 174, and 228 to 267; these read AHTD…EPDS, NHQD…EHTL, RTTL…QIFS, PAKA…LIKF, and ENHS…VVVE. Residues 306–362 are disordered; the sequence is LKEENDPTKPLTSSKSKNRTSKELDDLFGSDDEQSQNVNDLDGNSANEENEFINHDG. The segment covering 340-352 has biased composition (polar residues); that stretch reads SQNVNDLDGNSAN. A WD 6 repeat occupies 517–553; that stretch reads ENESPVTISLSSSVVLVCTSAGYVRVFSRQGFPISIH.

As to quaternary structure, interacts with pof3 and pol1.

The protein resides in the nucleus. It localises to the chromosome. In terms of biological role, has a role in regulating DNA replication complexes. Acts as a regulator of post DNA replication initiation. Associates with chromatin during G1 and S phases of mitosis. Required for the transcriptional repression of the outer repeats of the centromeric region. Acts as a polymerase alpha replication accessory factor and is important for S-phase DNA damage survival. Plays a role in lagging-strand synthesis and Ozaki fragment processing, in addition to DNA repair. The protein is Minichromosome loss protein 1 (mcl1) of Schizosaccharomyces pombe (strain 972 / ATCC 24843) (Fission yeast).